Consider the following 158-residue polypeptide: Small ribosomal subunit protein uS10m (158 aa).

The protein belongs to the universal ribosomal protein uS10 family.

The protein localises to the mitochondrion. This is Small ribosomal subunit protein uS10m (mrps-10) from Caenorhabditis briggsae.